Here is a 192-residue protein sequence, read N- to C-terminus: Probable molybdenum cofactor guanylyltransferase (192 aa).

GTP is bound by residues 8–10 (LAG), lysine 20, aspartate 69, and aspartate 94. Mg(2+) is bound at residue aspartate 94.

It belongs to the MobA family. It depends on Mg(2+) as a cofactor.

Its subcellular location is the cytoplasm. The catalysed reaction is Mo-molybdopterin + GTP + H(+) = Mo-molybdopterin guanine dinucleotide + diphosphate. Transfers a GMP moiety from GTP to Mo-molybdopterin (Mo-MPT) cofactor (Moco or molybdenum cofactor) to form Mo-molybdopterin guanine dinucleotide (Mo-MGD) cofactor. The sequence is that of Probable molybdenum cofactor guanylyltransferase from Pyrococcus horikoshii (strain ATCC 700860 / DSM 12428 / JCM 9974 / NBRC 100139 / OT-3).